The primary structure comprises 89 residues: Small ribosomal subunit protein bS20 (89 aa).

Residues 1–28 (MTLANIKSAKKRAIQSEKRRQHNASQRS) are disordered.

Belongs to the bacterial ribosomal protein bS20 family.

Its function is as follows. Binds directly to 16S ribosomal RNA. The sequence is that of Small ribosomal subunit protein bS20 from Pasteurella multocida (strain Pm70).